The sequence spans 122 residues: Large ribosomal subunit protein uL14c (122 aa).

This sequence belongs to the universal ribosomal protein uL14 family. In terms of assembly, part of the 50S ribosomal subunit.

Its subcellular location is the plastid. Binds to 23S rRNA. The sequence is that of Large ribosomal subunit protein uL14c from Cuscuta reflexa (Southern Asian dodder).